Consider the following 212-residue polypeptide: Transcriptional regulator GfcR (212 aa).

Residues 38–60 (LVERSGTGTEPDTSDDGGPHDIH) are disordered.

This sequence belongs to the purine/pyrimidine phosphoribosyltransferase family. GfcR subfamily.

Its function is as follows. DNA-binding transcriptional regulator that functions as a regulator of central sugar catabolic pathways. In Haloarcula marismortui (strain ATCC 43049 / DSM 3752 / JCM 8966 / VKM B-1809) (Halobacterium marismortui), this protein is Transcriptional regulator GfcR.